Here is a 252-residue protein sequence, read N- to C-terminus: 3-deoxy-manno-octulosonate cytidylyltransferase (252 aa).

Belongs to the KdsB family.

Its subcellular location is the cytoplasm. It catalyses the reaction 3-deoxy-alpha-D-manno-oct-2-ulosonate + CTP = CMP-3-deoxy-beta-D-manno-octulosonate + diphosphate. It functions in the pathway nucleotide-sugar biosynthesis; CMP-3-deoxy-D-manno-octulosonate biosynthesis; CMP-3-deoxy-D-manno-octulosonate from 3-deoxy-D-manno-octulosonate and CTP: step 1/1. Its pathway is bacterial outer membrane biogenesis; lipopolysaccharide biosynthesis. In terms of biological role, activates KDO (a required 8-carbon sugar) for incorporation into bacterial lipopolysaccharide in Gram-negative bacteria. The protein is 3-deoxy-manno-octulosonate cytidylyltransferase of Vibrio cholerae serotype O1 (strain ATCC 39315 / El Tor Inaba N16961).